A 214-amino-acid chain; its full sequence is MQRILDLRRIYALTVDPRTLHGSVWKVDFKVVRQELIRYIKDLALFEGEFILSSGQKSSYYIDLRRVSLDCRAAPIIGKVMFDLICDLQDVDAIGGLTMGADPIACAIMHYAASVGRSYNAFVVRKQKKTHGLARLIEGPDIRGKRVVIVEDTSTTGNSPITAARRAEETGATVAAIAVMVDRETGARQAIEKAGYSYYAALRVTDILDRGTAD.

5-phospho-alpha-D-ribose 1-diphosphate contacts are provided by residues arginine 125, lysine 126, lysine 129, histidine 131, and glutamate 151–serine 159. Residues threonine 155 and arginine 183 each coordinate orotate.

It belongs to the purine/pyrimidine phosphoribosyltransferase family. PyrE subfamily. In terms of assembly, homodimer. Mg(2+) serves as cofactor.

It catalyses the reaction orotidine 5'-phosphate + diphosphate = orotate + 5-phospho-alpha-D-ribose 1-diphosphate. Its pathway is pyrimidine metabolism; UMP biosynthesis via de novo pathway; UMP from orotate: step 1/2. Functionally, catalyzes the transfer of a ribosyl phosphate group from 5-phosphoribose 1-diphosphate to orotate, leading to the formation of orotidine monophosphate (OMP). The sequence is that of Orotate phosphoribosyltransferase from Tropheryma whipplei (strain Twist) (Whipple's bacillus).